Consider the following 201-residue polypeptide: FMN-dependent NADH:quinone oxidoreductase (201 aa).

FMN is bound by residues S10, 16–18, 96–99, and 140–143; these read SQS, MYNF, and SRGG.

This sequence belongs to the azoreductase type 1 family. As to quaternary structure, homodimer. It depends on FMN as a cofactor.

It catalyses the reaction 2 a quinone + NADH + H(+) = 2 a 1,4-benzosemiquinone + NAD(+). The catalysed reaction is N,N-dimethyl-1,4-phenylenediamine + anthranilate + 2 NAD(+) = 2-(4-dimethylaminophenyl)diazenylbenzoate + 2 NADH + 2 H(+). In terms of biological role, quinone reductase that provides resistance to thiol-specific stress caused by electrophilic quinones. Its function is as follows. Also exhibits azoreductase activity. Catalyzes the reductive cleavage of the azo bond in aromatic azo compounds to the corresponding amines. The polypeptide is FMN-dependent NADH:quinone oxidoreductase (Escherichia coli O9:H4 (strain HS)).